A 566-amino-acid chain; its full sequence is MDLHYDCAESPAAEQPSGKINKTAFKLFGKRKSGSGMPTIFGVKNKGDSKGTGKIGMVRSKTLDGLADVVLESNKKEEPCTEAGAGQLNPEKSPKVLTINADVSSNSSVAKSHSFFSLLKKNGKSENVRGEQAEQKAGSRQKRGLKGLFNSMRWSKKDKSYKDDKEGASESQPGLILPSSLTASLECIKEETQKPLCEKGKSTEDIPADVPLAEHSGDVNTSAEENSLKASEESPCSALITEQPQLEDAPLAQLQENLCQLPQPEVETLQNNKDEHVTGCGDVIADQDDDGGSSMGSKLVPGNGKKVMSKKNTNIVAYQGGGEEMASPEQVDETYVQELFSMIPPSEGASEKTEKVNGTTQASREVKCSDSAQDRNAIKPSKLKQVPVYRKERGDQNSKANEKRQCLRNSDEGYWDSPTPGQEEEEPRSVGKQALARDSCSGDALYDLYTDPDESIAKAQVEEPPLSHSHSKPLSPVTTSCPVKTASSNKESKIPISIKHLPVHTTNQGTDSSSGSATGHPHPVKSELPRTKIPVSKVLVRRVSNKAITETAAGKRAIHDPARKHH.

4 disordered regions span residues 120–176 (KKNG…PGLI), 192–237 (TQKP…SPCS), 277–307 (VTGC…GKKV), and 342–533 (MIPP…RTKI). Basic and acidic residues-rich tracts occupy residues 123–134 (GKSENVRGEQAE), 155–168 (SKKD…KEGA), and 192–204 (TQKP…KSTE). Basic and acidic residues-rich tracts occupy residues 364–377 (REVK…DRNA) and 389–411 (YRKE…RNSD). Low complexity predominate over residues 464–476 (PPLSHSHSKPLSP). Polar residues-rich tracts occupy residues 477–489 (VTTS…ASSN) and 504–517 (HTTN…SGSA).

The protein belongs to the Amer family.

It localises to the cell membrane. In terms of biological role, negative regulator of the canonical Wnt signaling pathway involved in neuroectodermal patterning. Acts by specifically binding phosphatidylinositol 4,5-bisphosphate (PtdIns(4,5)P2), translocating to the cell membrane and interacting with key regulators of the canonical Wnt signaling pathway, such as components of the beta-catenin destruction complex. The protein is APC membrane recruitment protein 2 (amer2) of Xenopus tropicalis (Western clawed frog).